Here is a 362-residue protein sequence, read N- to C-terminus: Very-long-chain (3R)-3-hydroxyacyl-CoA dehydratase 3 (362 aa).

Methionine 1 carries the N-acetylmethionine modification. Over 1 to 149 (MENQVLTPHV…ETLTSLKKGY (149 aa)) the chain is Cytoplasmic. One can recognise a CS domain in the interval 5–94 (VLTPHVYWAQ…KESQWWERLT (90 aa)). The residue at position 7 (threonine 7) is a Phosphothreonine. The stretch at 111 to 136 (LDESDAEMELRAKEEEQLNKLRLESQ) forms a coiled coil. Residues serine 114 and serine 135 each carry the phosphoserine modification. Residues 150 to 170 (LFMYNLVQFLGFSWIFVNMTV) traverse the membrane as a helical segment. Residues 171 to 189 (RFFILGKESFYDTFHTVAD) are Lumenal-facing. The chain crosses the membrane as a helical span at residues 190–210 (MMYFCQMLAAVESINAAIGVT). The Cytoplasmic portion of the chain corresponds to 211-212 (KS). The chain crosses the membrane as a helical span at residues 213-233 (PVVPSLFQLLGRNFILFIIFG). Over 234–242 (TMEEMQNKA) the chain is Lumenal. The chain crosses the membrane as a helical span at residues 243 to 263 (VVFFVFYIWSTVEIFRYPFYM). At 264–280 (LSCIDMDWKVLTWLRYT) the chain is on the cytoplasmic side. A helical membrane pass occupies residues 281 to 301 (VWIPLYPMGCLAEAVSVIQSI). Catalysis depends on residues tyrosine 286 and glutamate 293. Over 302–325 (PVFNETGRFSFTLPYPVKIKVRFS) the chain is Lumenal. Residues 326-346 (FFLQIYLILLFLGLYVNFRYL) traverse the membrane as a helical segment. The Cytoplasmic portion of the chain corresponds to 347 to 362 (YKQRRRRFGQKKKKIH).

It belongs to the very long-chain fatty acids dehydratase HACD family. As to quaternary structure, may interact with enzymes of the ELO family (including ELOVL1); with those enzymes that mediate condensation, the first of the four steps of the reaction cycle responsible for fatty acids elongation, may be part of a larger fatty acids elongase complex. Interacts with RAC1. Associates with internalized insulin receptor/INSR complexes on Golgi/endosomal membranes; HACD3/PTPLAD1 together with ATIC and PRKAA2/AMPK2 is proposed to be part of a signaling network regulating INSR autophosphorylation and endocytosis.

It localises to the endoplasmic reticulum membrane. It catalyses the reaction a very-long-chain (3R)-3-hydroxyacyl-CoA = a very-long-chain (2E)-enoyl-CoA + H2O. It carries out the reaction (3R)-hydroxyhexadecanoyl-CoA = (2E)-hexadecenoyl-CoA + H2O. It functions in the pathway lipid metabolism; fatty acid biosynthesis. Functionally, catalyzes the third of the four reactions of the long-chain fatty acids elongation cycle. This endoplasmic reticulum-bound enzymatic process, allows the addition of two carbons to the chain of long- and very long-chain fatty acids/VLCFAs per cycle. This enzyme catalyzes the dehydration of the 3-hydroxyacyl-CoA intermediate into trans-2,3-enoyl-CoA, within each cycle of fatty acid elongation. Thereby, it participates in the production of VLCFAs of different chain lengths that are involved in multiple biological processes as precursors of membrane lipids and lipid mediators. Involved in Rac1-signaling pathways leading to the modulation of gene expression. Promotes insulin receptor/INSR autophosphorylation and is involved in INSR internalization. This Bos taurus (Bovine) protein is Very-long-chain (3R)-3-hydroxyacyl-CoA dehydratase 3.